Here is a 256-residue protein sequence, read N- to C-terminus: Undecaprenyl-diphosphatase (256 aa).

8 helical membrane-spanning segments follow: residues 5–25 (IIEI…PISS), 41–61 (NSLM…VFYF), 74–94 (LLSL…VISS), 100–120 (LLEN…IILY), 135–155 (LNFK…IPGV), 180–200 (FLLA…NAIG), 208–228 (LVLI…KFFL), and 234–254 (FSLN…FIII).

Belongs to the UppP family.

It is found in the cell inner membrane. The catalysed reaction is di-trans,octa-cis-undecaprenyl diphosphate + H2O = di-trans,octa-cis-undecaprenyl phosphate + phosphate + H(+). Functionally, catalyzes the dephosphorylation of undecaprenyl diphosphate (UPP). Confers resistance to bacitracin. In Pelagibacter ubique (strain HTCC1062), this protein is Undecaprenyl-diphosphatase.